A 96-amino-acid chain; its full sequence is MKIAITITVVMLSICCSSASSDICPGFLQVLEALLMESESGYVASLKPFNPGSDLQNAGTQLKRLVDTLPQETRINIMKLTEKILTSPLCKQDLRF.

A signal peptide spans 1–21 (MKIAITITVVMLSICCSSASS).

The protein belongs to the secretoglobin family. Antiparallel homodimer; disulfide-linked. Interaction with LMBR1L is controversial. As to expression, club cells (nonciliated cells of the surface epithelium of the pulmonary airways).

It localises to the secreted. Binds phosphatidylcholine, phosphatidylinositol, polychlorinated biphenyls (PCB) and weakly progesterone, potent inhibitor of phospholipase A2. This Mus musculus (Mouse) protein is Uteroglobin (Scgb1a1).